A 586-amino-acid chain; its full sequence is Phosphomethylpyrimidine synthase (586 aa).

Disordered stretches follow at residues 38–59 (IELS…TSGP) and 92–114 (GREI…VFPQ). Over residues 92–102 (GREIKPEDDGV) the composition is skewed to basic and acidic residues. Residues Asn193, Met222, Tyr251, His287, 307–309 (SRG), 348–351 (DGLR), and Glu387 each bind substrate. Residue His391 participates in Zn(2+) binding. Residue Tyr414 participates in substrate binding. Residue His455 participates in Zn(2+) binding. Residues Cys535, Cys538, and Cys543 each contribute to the [4Fe-4S] cluster site.

Belongs to the ThiC family. [4Fe-4S] cluster serves as cofactor.

It catalyses the reaction 5-amino-1-(5-phospho-beta-D-ribosyl)imidazole + S-adenosyl-L-methionine = 4-amino-2-methyl-5-(phosphooxymethyl)pyrimidine + CO + 5'-deoxyadenosine + formate + L-methionine + 3 H(+). The protein operates within cofactor biosynthesis; thiamine diphosphate biosynthesis. Catalyzes the synthesis of the hydroxymethylpyrimidine phosphate (HMP-P) moiety of thiamine from aminoimidazole ribotide (AIR) in a radical S-adenosyl-L-methionine (SAM)-dependent reaction. In Bacillus cytotoxicus (strain DSM 22905 / CIP 110041 / 391-98 / NVH 391-98), this protein is Phosphomethylpyrimidine synthase.